The chain runs to 327 residues: COP9 signalosome complex subunit 7 (327 aa).

A PCI domain is found at 4–165; it reads VHHRALDALQ…NPPTVNVTSV (162 aa). Disordered stretches follow at residues 233–260 and 276–327; these read GGEQ…AGWK and GGSN…GKKS. Gly residues predominate over residues 236 to 255; the sequence is QLQGGNPGQGQGQGQGGLGK. Residues 315-327 show a composition bias toward basic residues; the sequence is GARHSKRFLGKKS.

It belongs to the CSN7/EIF3M family. CSN7 subfamily. As to quaternary structure, component of the COP9 signalosome (CSN) complex. As to expression, present in uninduced vegetative hyphae, induced conidiating cultures and in both conidiospores and ascospores.

It localises to the cytoplasm. The protein localises to the nucleus. In terms of biological role, component of the COP9 signalosome (CSN) complex that acts as an regulator of the ubiquitin (Ubl) conjugation pathway by mediating the deneddylation of the cullin subunit of SCF-type E3 ubiquitin-protein ligase complexes. The CSN complex seems to link protein degradation to sexual development. May be required for sporulation only at elevated temperatures. The protein is COP9 signalosome complex subunit 7 (csnG) of Emericella nidulans (strain FGSC A4 / ATCC 38163 / CBS 112.46 / NRRL 194 / M139) (Aspergillus nidulans).